The following is a 157-amino-acid chain: Aspartate carbamoyltransferase regulatory chain (157 aa).

Zn(2+) contacts are provided by C108, C113, C138, and C141.

Belongs to the PyrI family. In terms of assembly, contains catalytic and regulatory chains. Requires Zn(2+) as cofactor.

Its function is as follows. Involved in allosteric regulation of aspartate carbamoyltransferase. The sequence is that of Aspartate carbamoyltransferase regulatory chain from Korarchaeum cryptofilum (strain OPF8).